The sequence spans 248 residues: MALLEICCYSMECALTAQQNGADRVELCAAPKEGGLTPSLGVLKSVRQRVTIPVHPIIRPRGGDFCYSDGEFAAILEDVRTVRELGFPGLVTGVLDVDGNVDMSRMEKIMAAAGPLAVTFHRAFDMCANPLNTLNNLAELGIARVLTSGQKSDALQGLSKIMELIAHRDAPIIMAGAGVRAENLHHFLDAGVLEVHSSAGAWQASPMRYRNQGLSMSSDAHADEYSRYVVDGAAVAEMKGIIERHQAK.

The protein belongs to the CutC family. In terms of assembly, homodimer.

It localises to the cytoplasm. This is PF03932 family protein CutC from Escherichia coli O157:H7.